Consider the following 435-residue polypeptide: Astacin-like metalloendopeptidase (435 aa).

Positions 1-23 (MGIMGSLWPWILTMLSLLGLSMG) are cleaved as a signal peptide. Positions 85–282 (RLLSVTNNKW…TRVCRLYNCS (198 aa)) constitute a Peptidase M12A domain. Intrachain disulfides connect cysteine 132–cysteine 281 and cysteine 153–cysteine 172. Histidine 182 serves as a coordination point for Zn(2+). Residue glutamate 183 is part of the active site. Residues histidine 186 and histidine 192 each coordinate Zn(2+). A compositionally biased stretch (low complexity) spans 318–329 (SEESGSSAPSGS). The tract at residues 318–356 (SEESGSSAPSGSRTGGQSIAGLGNSQQGWEHPPQSTFSV) is disordered. Residues 340-355 (GNSQQGWEHPPQSTFS) show a composition bias toward polar residues.

Interacts (via N-terminal domain) with SPACA3; the interaction occurs during fertilization. It depends on Zn(2+) as a cofactor. As to expression, ovary-specific. Expressed in secondary, antral and Graafian follicle oocytes. Expressed in the egg cells. Not detected in two-cell embryos. Not detected in naked oocytes, oocytes in primordial or unilaminar primary follicles, or in any other ovarian cells at pre-pubertal, pubertal or adult stages (at protein level). Ovary-specific.

Its subcellular location is the cytoplasm. The protein localises to the cell membrane. The protein resides in the cytoplasmic vesicle. It is found in the secretory vesicle. It localises to the cortical granule. Inhibited by wide spectrum metalloproteinase inhibitor batimastat (BB-94). Also inhibited by EDTA. Functionally, oocyte-specific oolemmal receptor involved in sperm and egg adhesion and fertilization. Plays a role in the polyspermy inhibition. Probably acts as a protease for the post-fertilization cleavage of ZP2. Cleaves the sperm-binding ZP2 at the surface of the zona pellucida after fertilization and cortical granule exocytosis, rendering the zona pellucida unable to support further sperm binding. The sequence is that of Astacin-like metalloendopeptidase from Mus musculus (Mouse).